Consider the following 325-residue polypeptide: Biotin synthase (325 aa).

In terms of domain architecture, Radical SAM core spans 46 to 270 (NNSNNIDLCS…IAICKLILPN (225 aa)). The [4Fe-4S] cluster site is built by cysteine 64, cysteine 68, and cysteine 71. Residues serine 107, cysteine 139, cysteine 198, and arginine 274 each contribute to the [2Fe-2S] cluster site.

The protein belongs to the radical SAM superfamily. Biotin synthase family. Homodimer. The cofactor is [4Fe-4S] cluster. [2Fe-2S] cluster is required as a cofactor.

It catalyses the reaction (4R,5S)-dethiobiotin + (sulfur carrier)-SH + 2 reduced [2Fe-2S]-[ferredoxin] + 2 S-adenosyl-L-methionine = (sulfur carrier)-H + biotin + 2 5'-deoxyadenosine + 2 L-methionine + 2 oxidized [2Fe-2S]-[ferredoxin]. It functions in the pathway cofactor biosynthesis; biotin biosynthesis; biotin from 7,8-diaminononanoate: step 2/2. Functionally, catalyzes the conversion of dethiobiotin (DTB) to biotin by the insertion of a sulfur atom into dethiobiotin via a radical-based mechanism. This chain is Biotin synthase, found in Methanococcus aeolicus (strain ATCC BAA-1280 / DSM 17508 / OCM 812 / Nankai-3).